Consider the following 108-residue polypeptide: Glutaredoxin-C10 (108 aa).

Residues 1–107 (MERVAKLASE…PMLKNAGALW (107 aa)) enclose the Glutaredoxin domain. An intrachain disulfide couples cysteine 21 to cysteine 24. The Responsive for interaction with TGA factors signature appears at 105–108 (ALWL).

It belongs to the glutaredoxin family. CC-type subfamily.

The protein localises to the cytoplasm. It is found in the nucleus. In terms of biological role, has a glutathione-disulfide oxidoreductase activity in the presence of NADPH and glutathione reductase. Reduces low molecular weight disulfides and proteins. This chain is Glutaredoxin-C10 (GRXC10), found in Oryza sativa subsp. japonica (Rice).